A 220-amino-acid chain; its full sequence is MVYKLVLLFCIASLGYSVEYKNTICPPRQDYRYWYFAAELTIGVNYDINSTIIGECHMSESYIDRNANIVLTGYGLEINMTIMDTDQRFVAAAEGVGKDNKLSVLLFTTQRLDKVHHNISVTITCMEMNCGTTKYDSDLPESIHKSSSCDITINGSCVTCVNLETDPTKINPHYLHPKDKYLYHNSEYSMRGSYGVTFIDELNQCLLDIKELSYDICYRE.

Positions 1 to 17 are cleaved as a signal peptide; that stretch reads MVYKLVLLFCIASLGYS. N-linked (GlcNAc...) asparagine; by host glycosylation is found at Asn-49, Asn-79, Asn-118, and Asn-154.

It belongs to the orthopoxvirus OPG038 family. Homooligomer. Interacts with host CD80 and CD86 when secreted. Post-translationally, glycosylated by host.

The protein localises to the host endoplasmic reticulum. It is found in the secreted. Its function is as follows. Plays a role in immune evasion. When secreted, inhibits T-cell activation by preventing the binding of host CD80 and CD86 to soluble CTLA4 and CD28. In the infected cell, may inhibits host NF kappa B activation. The protein is Early protein OPG038 (OPG038) of Bos taurus (Bovine).